We begin with the raw amino-acid sequence, 154 residues long: Myoglobin (154 aa).

Residues glycine 2 to lysine 148 form the Globin domain. Histidine 65 contributes to the nitrite binding site. Histidine 65 contributes to the O2 binding site. Histidine 94 is a heme b binding site.

Belongs to the globin family. In terms of assembly, monomeric.

It localises to the cytoplasm. The protein resides in the sarcoplasm. The enzyme catalyses Fe(III)-heme b-[protein] + nitric oxide + H2O = Fe(II)-heme b-[protein] + nitrite + 2 H(+). It carries out the reaction H2O2 + AH2 = A + 2 H2O. Monomeric heme protein which primary function is to store oxygen and facilitate its diffusion within muscle tissues. Reversibly binds oxygen through a pentacoordinated heme iron and enables its timely and efficient release as needed during periods of heightened demand. Depending on the oxidative conditions of tissues and cells, and in addition to its ability to bind oxygen, it also has a nitrite reductase activity whereby it regulates the production of bioactive nitric oxide. Under stress conditions, like hypoxia and anoxia, it also protects cells against reactive oxygen species thanks to its pseudoperoxidase activity. The protein is Myoglobin (MB) of Uria lomvia (Thick-billed murre).